A 649-amino-acid chain; its full sequence is Acid beta-fructofuranosidase (649 aa).

The Cytoplasmic segment spans residues M1–K22. Positions M1–A101 are cleaved as a propeptide — removed in mature form. The helical; Signal-anchor for type II membrane protein transmembrane segment at D23–Y43 threads the bilayer. Residues R44–S649 lie on the Lumenal side of the membrane. Residues H52–W75 are disordered. A compositionally biased stretch (polar residues) spans S54–S72. Substrate contacts are provided by residues W127 to D130, Q146, W154, and W189 to T190. D130 is an active-site residue. The N-linked (GlcNAc...) (complex) asparagine glycan is linked to N210. Residue R253–D254 coordinates substrate. N275 carries N-linked (GlcNAc...) (complex) asparagine glycosylation. Positions 308 and 341 each coordinate substrate. Residues C498 and C546 are joined by a disulfide bond. N-linked (GlcNAc...) (high mannose) asparagine glycosylation is present at N618.

It belongs to the glycosyl hydrolase 32 family. Present in two forms, a 70 kDa monomer and a heterodimer of the 30 kDa and 38 kDa subunits. The ratio of the levels of the two forms within cells appears to be regulated developmentally.

The protein resides in the membrane. It is found in the vacuole lumen. It carries out the reaction Hydrolysis of terminal non-reducing beta-D-fructofuranoside residues in beta-D-fructofuranosides.. It functions in the pathway glycan biosynthesis; sucrose metabolism. Possible role in the continued mobilization of sucrose to sink organs. This Vigna radiata var. radiata (Mung bean) protein is Acid beta-fructofuranosidase (INVA).